Consider the following 156-residue polypeptide: Endoribonuclease YbeY (156 aa).

Zn(2+) is bound by residues histidine 122, histidine 126, and histidine 132.

It belongs to the endoribonuclease YbeY family. The cofactor is Zn(2+).

Its subcellular location is the cytoplasm. Functionally, single strand-specific metallo-endoribonuclease involved in late-stage 70S ribosome quality control and in maturation of the 3' terminus of the 16S rRNA. This is Endoribonuclease YbeY from Bacillus cereus (strain ATCC 14579 / DSM 31 / CCUG 7414 / JCM 2152 / NBRC 15305 / NCIMB 9373 / NCTC 2599 / NRRL B-3711).